A 193-amino-acid chain; its full sequence is Probable GTP-binding protein EngB (193 aa).

The EngB-type G domain occupies 22–193 (ALPEFALAGR…EAWAALERFL (172 aa)). GTP contacts are provided by residues 30–37 (GRSNVGKS), 57–61 (GKTQT), 75–78 (DVPG), 142–145 (TKAD), and 174–176 (FSA). Residues serine 37 and threonine 59 each coordinate Mg(2+).

This sequence belongs to the TRAFAC class TrmE-Era-EngA-EngB-Septin-like GTPase superfamily. EngB GTPase family. Mg(2+) is required as a cofactor.

Necessary for normal cell division and for the maintenance of normal septation. The sequence is that of Probable GTP-binding protein EngB from Geobacillus sp. (strain WCH70).